The following is a 506-amino-acid chain: MSTANNNSESTESVSMNAFKQPKAFYLIFSIELWERFGYYGLQGIMAVYLVKMLGMSETDSITLFSSFSALVYGFVAIGGWLGDKVLGTKRVIVLGAIVLAIGYTMIAYSGHSVAWVYIGMATIAVGNGLFKANPSALLSTCYAKDDPRLDGAFTMYYMAVNIGSFFSMLATPVLAANYGWSVAFSLSVVGMILTLVNFMFCRKWVSTQGSQPDFQPINLKKLVITLAGIVVLVALSTWLLHNQGVARWILTIISLAVVAIFIKEMLAVSGAERRKMIVALLLMLEAVVFFVLYNQMPTSLNFFAIRNVEHSILGFAFEPEQYQALNPFWIMVASPLLAAVYNKMGDQLPMAHKFAIGMVLCSGAFLVLPWGASMANEQGIVSVNWLILCYGLQSIGELMISGLGLAMVAQLVPQRLMGFIMGAWFLTSAGAAIIAGYVANMMAVPENVVDPHVSLEVYSNVFMQIGIVTGIIAVLMMLTAPKLTRMTQDVATDVPADAATTTASA.

Residues Met1–Arg36 are Cytoplasmic-facing. Residues Phe37–Ser57 form a helical membrane-spanning segment. The Periplasmic segment spans residues Glu58–Ser61. A helical transmembrane segment spans residues Ile62–Leu82. Topologically, residues Gly83 to Arg91 are cytoplasmic. The next 2 helical transmembrane spans lie at Val92–His112 and Ser113–Ala133. The Cytoplasmic segment spans residues Asn134–Thr155. The chain crosses the membrane as a helical span at residues Met156–Ala176. Residues Ala177 to Gly180 lie on the Periplasmic side of the membrane. A helical transmembrane segment spans residues Trp181–Phe201. Residues Cys202–Lys222 are Cytoplasmic-facing. The helical transmembrane segment at Leu223–Asn243 threads the bilayer. The Periplasmic portion of the chain corresponds to Gln244–Arg248. The chain crosses the membrane as a helical span at residues Trp249 to Val269. Residues Ser270 to Lys276 are Cytoplasmic-facing. The chain crosses the membrane as a helical span at residues Met277–Met297. Residues Pro298–Gln322 lie on the Periplasmic side of the membrane. Residues Tyr323–Asn343 traverse the membrane as a helical segment. At Lys344–Lys354 the chain is on the cytoplasmic side. The helical transmembrane segment at Phe355–Met375 threads the bilayer. The Periplasmic portion of the chain corresponds to Ala376 to Asn385. Residues Trp386–Leu406 traverse the membrane as a helical segment. The Cytoplasmic segment spans residues Ala407–Arg416. A helical membrane pass occupies residues Leu417–Gly437. The Periplasmic segment spans residues Tyr438 to Asn461. A helical membrane pass occupies residues Val462–Pro482. At Lys483–Ala506 the chain is on the cytoplasmic side.

It belongs to the major facilitator superfamily. Proton-dependent oligopeptide transporter (POT/PTR) (TC 2.A.17) family. DtpA subfamily.

The protein localises to the cell inner membrane. Its function is as follows. Proton-dependent permease that transports di- and tripeptides. In Pectobacterium carotovorum subsp. carotovorum (strain PC1), this protein is Dipeptide and tripeptide permease A.